The chain runs to 105 residues: Large ribosomal subunit protein uL24 (105 aa).

Belongs to the universal ribosomal protein uL24 family. Part of the 50S ribosomal subunit.

One of two assembly initiator proteins, it binds directly to the 5'-end of the 23S rRNA, where it nucleates assembly of the 50S subunit. Its function is as follows. One of the proteins that surrounds the polypeptide exit tunnel on the outside of the subunit. The protein is Large ribosomal subunit protein uL24 of Mycobacterium leprae (strain Br4923).